The following is a 160-amino-acid chain: Large ribosomal subunit protein uL16 (160 aa).

This sequence belongs to the universal ribosomal protein uL16 family. Part of the 50S ribosomal subunit.

Functionally, binds 23S rRNA and is also seen to make contacts with the A and possibly P site tRNAs. The sequence is that of Large ribosomal subunit protein uL16 from Prochlorococcus marinus (strain MIT 9515).